A 59-amino-acid chain; its full sequence is Large ribosomal subunit protein bL32 (59 aa).

The segment covering 1–22 has biased composition (basic residues); that stretch reads MAVPKKKTSNSKRDSRRAHWNR. Residues 1–59 are disordered; the sequence is MAVPKKKTSNSKRDSRRAHWNRKANLAAQRALSTGKSILTGRAKGFEYPTKDDDEDDDE.

This sequence belongs to the bacterial ribosomal protein bL32 family.

The protein is Large ribosomal subunit protein bL32 of Acaryochloris marina (strain MBIC 11017).